The following is a 133-amino-acid chain: MSEEGFMLAVLKGIPLIQDIRAEGNSRSWIMTIDGHPARGEIFSEAFSISLFLNDLESLPKPCLAYVTLLLAAHPDVHDYAIQLTADGGWLNGYYTTSSSSELIAIEIEKHLALTCILKNVIRNHHKLYSGGV.

As to quaternary structure, interacts with the mammalian NIPSNAP3A and HOOK3 proteins in infected cells.

Its subcellular location is the secreted. The protein localises to the cytoplasm. Virulence protein that plays a central role in mammalian macrophage infection, by inhibiting phagosome-lysosome fusion and cellular trafficking, including trafficking of organelles that are devoid of Salmonella. May act by disrupting the function of the mammalian HOOK3 protein, a protein involved in the cellular traffic. Also required for actin ADP-ribosylase SpvB activity. This is Salmonella pathogenicity island 2 protein C (spiC) from Salmonella typhimurium (strain 14028s / SGSC 2262).